The chain runs to 212 residues: 3,4-dihydroxy-2-butanone 4-phosphate synthase (212 aa).

Residues 37 to 38, Asp42, 150 to 154, and Glu174 each bind D-ribulose 5-phosphate; these read RE and RRGHT. Residue Glu38 participates in Mg(2+) binding. His153 is a binding site for Mg(2+).

The protein belongs to the DHBP synthase family. As to quaternary structure, homodimer. Mg(2+) serves as cofactor. Requires Mn(2+) as cofactor.

The enzyme catalyses D-ribulose 5-phosphate = (2S)-2-hydroxy-3-oxobutyl phosphate + formate + H(+). It participates in cofactor biosynthesis; riboflavin biosynthesis; 2-hydroxy-3-oxobutyl phosphate from D-ribulose 5-phosphate: step 1/1. Functionally, catalyzes the conversion of D-ribulose 5-phosphate to formate and 3,4-dihydroxy-2-butanone 4-phosphate. The sequence is that of 3,4-dihydroxy-2-butanone 4-phosphate synthase from Histophilus somni (strain 129Pt) (Haemophilus somnus).